A 729-amino-acid chain; its full sequence is Phosphoribosylformylglycinamidine synthase subunit PurL (729 aa).

Histidine 54 is an active-site residue. Positions 57 and 96 each coordinate ATP. Glutamate 98 lines the Mg(2+) pocket. Residues 99-102 (SHNH) and arginine 121 contribute to the substrate site. Histidine 100 acts as the Proton acceptor in catalysis. Aspartate 122 is a binding site for Mg(2+). Glutamine 245 is a substrate binding site. Aspartate 273 serves as a coordination point for Mg(2+). Residue 317–319 (ETQ) participates in substrate binding. Aspartate 495 and glycine 532 together coordinate ATP. A Mg(2+)-binding site is contributed by asparagine 533. Position 535 (serine 535) interacts with substrate.

The protein belongs to the FGAMS family. As to quaternary structure, monomer. Part of the FGAM synthase complex composed of 1 PurL, 1 PurQ and 2 PurS subunits.

It localises to the cytoplasm. The catalysed reaction is N(2)-formyl-N(1)-(5-phospho-beta-D-ribosyl)glycinamide + L-glutamine + ATP + H2O = 2-formamido-N(1)-(5-O-phospho-beta-D-ribosyl)acetamidine + L-glutamate + ADP + phosphate + H(+). It functions in the pathway purine metabolism; IMP biosynthesis via de novo pathway; 5-amino-1-(5-phospho-D-ribosyl)imidazole from N(2)-formyl-N(1)-(5-phospho-D-ribosyl)glycinamide: step 1/2. Functionally, part of the phosphoribosylformylglycinamidine synthase complex involved in the purines biosynthetic pathway. Catalyzes the ATP-dependent conversion of formylglycinamide ribonucleotide (FGAR) and glutamine to yield formylglycinamidine ribonucleotide (FGAM) and glutamate. The FGAM synthase complex is composed of three subunits. PurQ produces an ammonia molecule by converting glutamine to glutamate. PurL transfers the ammonia molecule to FGAR to form FGAM in an ATP-dependent manner. PurS interacts with PurQ and PurL and is thought to assist in the transfer of the ammonia molecule from PurQ to PurL. This Staphylococcus aureus (strain Mu3 / ATCC 700698) protein is Phosphoribosylformylglycinamidine synthase subunit PurL.